The following is a 353-amino-acid chain: MGCGMSTEDKEGKARNEEIENQLKRDKMMQRNEIKMLLLGAGESGKSTILKQMKLIHEGGYSRDERESFKEIIYSNTVQSMRVILEAMESLELPLEDARNEYHVQTVFMQPAQIEGDSLPSEVGNAIAALWQDAGVQECFKRSREYQLNDSAKYYFDSIERIAQSDYLPTDQDVLRSRVKTTGITETTFIIGDLTYRMFDVGGQRSERKKWIHCFENVTTILFLVAISEYDQLLFEDETVNRMQEALTLFDSICNSRWFVKTSIILFLNKIDRFKEKLPVSPMKNYFPDYEGGADYAAACDYILNRFVSLNQAEQKQIYTHFTCATDTTQIRFVMAAVNDIIIQENLRLCGLI.

The disordered stretch occupies residues 1 to 25; it reads MGCGMSTEDKEGKARNEEIENQLKR. A lipid anchor (N-myristoyl glycine) is attached at Gly-2. A lipid anchor (S-palmitoyl cysteine) is attached at Cys-3. The segment covering 7–25 has biased composition (basic and acidic residues); that stretch reads TEDKEGKARNEEIENQLKR. The G-alpha domain maps to 32–353; that stretch reads NEIKMLLLGA…QENLRLCGLI (322 aa). The G1 motif stretch occupies residues 35 to 48; the sequence is KMLLLGAGESGKST. GTP is bound by residues Glu-43, Ser-44, Gly-45, Lys-46, Ser-47, Thr-48, Asp-150, Leu-175, Thr-181, Gly-203, Asn-269, Lys-270, Asp-272, and Ala-325. Ser-47 serves as a coordination point for Mg(2+). Residues 173–181 form a G2 motif region; the sequence is DVLRSRVKT. Mg(2+) is bound at residue Thr-181. A G3 motif region spans residues 196–205; it reads YRMFDVGGQR. The segment at 265–272 is G4 motif; the sequence is ILFLNKID. The segment at 323–328 is G5 motif; sequence TCATDT.

It belongs to the G-alpha family. G(q) subfamily. As to quaternary structure, g proteins are composed of 3 units; alpha, beta and gamma. The alpha chain contains the guanine nucleotide binding site. Mg(2+) is required as a cofactor.

Functionally, guanine nucleotide-binding proteins (G proteins) are involved as modulators or transducers in various transmembrane signaling systems. This Emericella nidulans (strain FGSC A4 / ATCC 38163 / CBS 112.46 / NRRL 194 / M139) (Aspergillus nidulans) protein is Guanine nucleotide-binding protein subunit alpha (fadA).